Reading from the N-terminus, the 212-residue chain is Stromal cell-derived factor 2-like protein (212 aa).

An N-terminal signal peptide occupies residues 1-19 (MKSLFLILILCITIPLIFA). N20 carries N-linked (GlcNAc...) asparagine glycosylation. MIR domains lie at 29-86 (ITKV…IKGP), 94-149 (GTVV…VETE), and 151-206 (GKEW…TEEG).

The protein localises to the secreted. This chain is Stromal cell-derived factor 2-like protein, found in Dictyostelium discoideum (Social amoeba).